Here is a 276-residue protein sequence, read N- to C-terminus: Bis(5'-nucleosyl)-tetraphosphatase, symmetrical (276 aa).

The protein belongs to the Ap4A hydrolase family.

It carries out the reaction P(1),P(4)-bis(5'-adenosyl) tetraphosphate + H2O = 2 ADP + 2 H(+). In terms of biological role, hydrolyzes diadenosine 5',5'''-P1,P4-tetraphosphate to yield ADP. The polypeptide is Bis(5'-nucleosyl)-tetraphosphatase, symmetrical (Dechloromonas aromatica (strain RCB)).